A 239-amino-acid chain; its full sequence is MRPSGRKTDQMRKVSFERNFSKHAEGSCLVRFGDTHVLCTASLEDKVPGWLRNGGKGWVTAEYGMLPRATGERMRREASAGKQSGRTQEIQRLIGRSLRAVVDLPALGERQISVDCDVIQADGGTRTASITGAWIALHDCLKWMEARNMVKLEKVLKDHVAAISCGIFASQPVVDLDYLEDSAAETDANFVMTGSGGLVEIQGTAEGKPFSEEEFASLMLLAKNGIAELIEMQKLAIAG.

Residues R86 and 124-126 (GTR) each bind phosphate.

Belongs to the RNase PH family. Homohexameric ring arranged as a trimer of dimers.

It catalyses the reaction tRNA(n+1) + phosphate = tRNA(n) + a ribonucleoside 5'-diphosphate. In terms of biological role, phosphorolytic 3'-5' exoribonuclease that plays an important role in tRNA 3'-end maturation. Removes nucleotide residues following the 3'-CCA terminus of tRNAs; can also add nucleotides to the ends of RNA molecules by using nucleoside diphosphates as substrates, but this may not be physiologically important. Probably plays a role in initiation of 16S rRNA degradation (leading to ribosome degradation) during starvation. This chain is Ribonuclease PH, found in Sinorhizobium medicae (strain WSM419) (Ensifer medicae).